A 166-amino-acid polypeptide reads, in one-letter code: Protein-export protein SecB (166 aa).

Belongs to the SecB family. In terms of assembly, homotetramer, a dimer of dimers. One homotetramer interacts with 1 SecA dimer.

It localises to the cytoplasm. Functionally, one of the proteins required for the normal export of preproteins out of the cell cytoplasm. It is a molecular chaperone that binds to a subset of precursor proteins, maintaining them in a translocation-competent state. It also specifically binds to its receptor SecA. The protein is Protein-export protein SecB of Actinobacillus pleuropneumoniae serotype 7 (strain AP76).